A 244-amino-acid polypeptide reads, in one-letter code: tRNA (guanine-N(1)-)-methyltransferase (244 aa).

Residues Gly-120 and 140–145 each bind S-adenosyl-L-methionine; that span reads IGDYIL.

This sequence belongs to the RNA methyltransferase TrmD family. In terms of assembly, homodimer.

The protein resides in the cytoplasm. The catalysed reaction is guanosine(37) in tRNA + S-adenosyl-L-methionine = N(1)-methylguanosine(37) in tRNA + S-adenosyl-L-homocysteine + H(+). Its function is as follows. Specifically methylates guanosine-37 in various tRNAs. In Brucella abortus (strain S19), this protein is tRNA (guanine-N(1)-)-methyltransferase.